The chain runs to 313 residues: Malate dehydrogenase (313 aa).

Residues Gly-11–Gly-16 and Asp-35 each bind NAD(+). Residues Arg-84 and Arg-90 each coordinate substrate. Residues Asn-97 and Val-120–Asn-122 each bind NAD(+). The substrate site is built by Asn-122 and Arg-153. The active-site Proton acceptor is His-177.

The protein belongs to the LDH/MDH superfamily. MDH type 3 family.

It catalyses the reaction (S)-malate + NAD(+) = oxaloacetate + NADH + H(+). In terms of biological role, catalyzes the reversible oxidation of malate to oxaloacetate. The protein is Malate dehydrogenase of Ehrlichia chaffeensis (strain ATCC CRL-10679 / Arkansas).